The following is a 330-amino-acid chain: Malate dehydrogenase (330 aa).

Residue 13-19 coordinates NAD(+); it reads GAAGQIG. Residues Arg94 and Arg100 each coordinate substrate. Residues Asn107, Gln114, and 131 to 133 contribute to the NAD(+) site; that span reads VGN. Positions 133 and 164 each coordinate substrate. The active-site Proton acceptor is the His189.

Belongs to the LDH/MDH superfamily. MDH type 2 family.

It carries out the reaction (S)-malate + NAD(+) = oxaloacetate + NADH + H(+). Functionally, catalyzes the reversible oxidation of malate to oxaloacetate. The protein is Malate dehydrogenase of Deinococcus radiodurans (strain ATCC 13939 / DSM 20539 / JCM 16871 / CCUG 27074 / LMG 4051 / NBRC 15346 / NCIMB 9279 / VKM B-1422 / R1).